The primary structure comprises 524 residues: Cytochrome P450 1A1 (524 aa).

Residues 33–44 form a mitochondrial targeting signal region; that stretch reads WQPRLPKGLKSP. Ser-71 carries an O-linked (GlcNAc) serine glycan. Substrate is bound at residue Phe-228. Cys-461 contacts heme.

The protein belongs to the cytochrome P450 family. Interacts with cytosolic chaperones HSP70 and HSP90; this interaction is required for initial targeting to mitochondria. Interacts (via mitochondrial targeting signal) with TOMM40 (via N-terminus); this interaction is required for translocation across the mitochondrial outer membrane. It depends on heme as a cofactor.

The protein resides in the endoplasmic reticulum membrane. It localises to the mitochondrion inner membrane. Its subcellular location is the microsome membrane. It is found in the cytoplasm. It catalyses the reaction an organic molecule + reduced [NADPH--hemoprotein reductase] + O2 = an alcohol + oxidized [NADPH--hemoprotein reductase] + H2O + H(+). It carries out the reaction estrone + reduced [NADPH--hemoprotein reductase] + O2 = 2-hydroxyestrone + oxidized [NADPH--hemoprotein reductase] + H2O + H(+). The enzyme catalyses estrone + reduced [NADPH--hemoprotein reductase] + O2 = 4-hydroxyestrone + oxidized [NADPH--hemoprotein reductase] + H2O + H(+). The catalysed reaction is estrone + reduced [NADPH--hemoprotein reductase] + O2 = 6alpha-hydroxyestrone + oxidized [NADPH--hemoprotein reductase] + H2O + H(+). It catalyses the reaction estrone + reduced [NADPH--hemoprotein reductase] + O2 = 15alpha-hydroxyestrone + oxidized [NADPH--hemoprotein reductase] + H2O + H(+). It carries out the reaction estrone + reduced [NADPH--hemoprotein reductase] + O2 = 16alpha-hydroxyestrone + oxidized [NADPH--hemoprotein reductase] + H2O + H(+). The enzyme catalyses 17beta-estradiol + reduced [NADPH--hemoprotein reductase] + O2 = 2-hydroxy-17beta-estradiol + oxidized [NADPH--hemoprotein reductase] + H2O + H(+). The catalysed reaction is 17beta-estradiol + reduced [NADPH--hemoprotein reductase] + O2 = 4-hydroxy-17beta-estradiol + oxidized [NADPH--hemoprotein reductase] + H2O + H(+). It catalyses the reaction 17beta-estradiol + reduced [NADPH--hemoprotein reductase] + O2 = 6alpha-hydroxy-17beta-estradiol + oxidized [NADPH--hemoprotein reductase] + H2O + H(+). It carries out the reaction 17beta-estradiol + reduced [NADPH--hemoprotein reductase] + O2 = 7alpha-hydroxy-17beta-estradiol + oxidized [NADPH--hemoprotein reductase] + H2O + H(+). The enzyme catalyses 17beta-estradiol + reduced [NADPH--hemoprotein reductase] + O2 = 15alpha-hydroxy-17beta-estradiol + oxidized [NADPH--hemoprotein reductase] + H2O + H(+). The catalysed reaction is (5Z,8Z,11Z)-eicosatrienoate + reduced [NADPH--hemoprotein reductase] + O2 = 19-hydroxy-(5Z,8Z,11Z)-eicosatrienoate + oxidized [NADPH--hemoprotein reductase] + H2O + H(+). It catalyses the reaction (5Z,8Z,11Z,14Z)-eicosatetraenoate + reduced [NADPH--hemoprotein reductase] + O2 = 16-hydroxy-(5Z,8Z,11Z,14Z)-eicosatetraenoate + oxidized [NADPH--hemoprotein reductase] + H2O + H(+). It carries out the reaction (5Z,8Z,11Z,14Z)-eicosatetraenoate + reduced [NADPH--hemoprotein reductase] + O2 = 17-hydroxy-(5Z,8Z,11Z,14Z)-eicosatetraenoate + oxidized [NADPH--hemoprotein reductase] + H2O + H(+). The enzyme catalyses (5Z,8Z,11Z,14Z)-eicosatetraenoate + reduced [NADPH--hemoprotein reductase] + O2 = 18-hydroxy-(5Z,8Z,11Z,14Z)-eicosatetraenoate + oxidized [NADPH--hemoprotein reductase] + H2O + H(+). The catalysed reaction is (5Z,8Z,11Z,14Z)-eicosatetraenoate + reduced [NADPH--hemoprotein reductase] + O2 = 19-hydroxy-(5Z,8Z,11Z,14Z)-eicosatetraenoate + oxidized [NADPH--hemoprotein reductase] + H2O + H(+). It catalyses the reaction (5Z,8Z,11Z,14Z,17Z)-eicosapentaenoate + reduced [NADPH--hemoprotein reductase] + O2 = 19-hydroxy-(5Z,8Z,11Z,14Z,17Z)-eicosapentaenoate + oxidized [NADPH--hemoprotein reductase] + H2O + H(+). It carries out the reaction (5Z,8Z,11Z,14Z)-eicosatetraenoate + reduced [NADPH--hemoprotein reductase] + O2 = (8R,9S)-epoxy-(5Z,11Z,14Z)-eicosatrienoate + oxidized [NADPH--hemoprotein reductase] + H2O + H(+). The enzyme catalyses (5Z,8Z,11Z,14Z)-eicosatetraenoate + reduced [NADPH--hemoprotein reductase] + O2 = (11R,12S)-epoxy-(5Z,8Z,14Z)-eicosatrienoate + oxidized [NADPH--hemoprotein reductase] + H2O + H(+). The catalysed reaction is (5Z,8Z,11Z,14Z)-eicosatetraenoate + reduced [NADPH--hemoprotein reductase] + O2 = (14S,15R)-epoxy-(5Z,8Z,11Z)-eicosatrienoate + oxidized [NADPH--hemoprotein reductase] + H2O + H(+). It catalyses the reaction (5Z,8Z,11Z,14Z)-eicosatetraenoate + reduced [NADPH--hemoprotein reductase] + O2 = (14R,15S)-epoxy-(5Z,8Z,11Z)-eicosatrienoate + oxidized [NADPH--hemoprotein reductase] + H2O + H(+). It carries out the reaction (5Z,8Z,11Z,14Z,17Z)-eicosapentaenoate + reduced [NADPH--hemoprotein reductase] + O2 = (17R,18S)-epoxy-(5Z,8Z,11Z,14Z)-eicosatetraenoate + oxidized [NADPH--hemoprotein reductase] + H2O + H(+). The enzyme catalyses (4Z,7Z,10Z,13Z,16Z,19Z)-docosahexaenoate + reduced [NADPH--hemoprotein reductase] + O2 = (19S,20R)-epoxy-(4Z,7Z,10Z,13Z,16Z)-docosapentaenoate + oxidized [NADPH--hemoprotein reductase] + H2O + H(+). The catalysed reaction is (4Z,7Z,10Z,13Z,16Z,19Z)-docosahexaenoate + reduced [NADPH--hemoprotein reductase] + O2 = (19R,20S)-epoxy-(4Z,7Z,10Z,13Z,16Z)-docosapentaenoate + oxidized [NADPH--hemoprotein reductase] + H2O + H(+). It catalyses the reaction all-trans-retinol + reduced [NADPH--hemoprotein reductase] + O2 = all-trans-retinal + oxidized [NADPH--hemoprotein reductase] + 2 H2O + H(+). It carries out the reaction all-trans-retinal + reduced [NADPH--hemoprotein reductase] + O2 = all-trans-retinoate + oxidized [NADPH--hemoprotein reductase] + H2O + 2 H(+). The enzyme catalyses (13S)-hydroperoxy-(9Z,11E)-octadecadienoate = 13-oxo-(9Z,11E)-octadecadienoate + H2O. The catalysed reaction is (12S)-hydroperoxy-(5Z,8Z,10E,14Z)-eicosatetraenoate = 12-oxo-(5Z,8Z,10E,14Z)-eicosatetraenoate + H2O. It catalyses the reaction (15S)-hydroperoxy-(5Z,8Z,11Z,13E)-eicosatetraenoate = 15-oxo-(5Z,8Z,11Z,13E)-eicosatetraenoate + H2O. It carries out the reaction (5S)-hydroperoxy-(6E,8Z,11Z,14Z)-eicosatetraenoate = 5-oxo-(6E,8Z,11Z,14Z)-eicosatetraenoate + H2O. The protein operates within steroid hormone biosynthesis. It participates in lipid metabolism; fatty acid metabolism. It functions in the pathway cofactor metabolism; retinol metabolism. Its function is as follows. A cytochrome P450 monooxygenase involved in the metabolism of various endogenous substrates, including fatty acids, steroid hormones and vitamins. Mechanistically, uses molecular oxygen inserting one oxygen atom into a substrate, and reducing the second into a water molecule, with two electrons provided by NADPH via cytochrome P450 reductase (CPR; NADPH-ferrihemoprotein reductase). Catalyzes the hydroxylation of carbon-hydrogen bonds. Exhibits high catalytic activity for the formation of hydroxyestrogens from estrone (E1) and 17beta-estradiol (E2), namely 2-hydroxy E1 and E2, as well as D-ring hydroxylated E1 and E2 at the C15alpha and C16alpha positions. Displays different regioselectivities for polyunsaturated fatty acids (PUFA) hydroxylation. Catalyzes the epoxidation of double bonds of certain PUFA. Converts arachidonic acid toward epoxyeicosatrienoic acid (EET) regioisomers, 8,9-, 11,12-, and 14,15-EET, that function as lipid mediators in the vascular system. Displays an absolute stereoselectivity in the epoxidation of eicosapentaenoic acid (EPA) producing the 17(R),18(S) enantiomer. May play an important role in all-trans retinoic acid biosynthesis in extrahepatic tissues. Catalyzes two successive oxidative transformation of all-trans retinol to all-trans retinal and then to the active form all-trans retinoic acid. May also participate in eicosanoids metabolism by converting hydroperoxide species into oxo metabolites (lipoxygenase-like reaction, NADPH-independent). The sequence is that of Cytochrome P450 1A1 (CYP1A1) from Canis lupus familiaris (Dog).